The chain runs to 182 residues: ATP-dependent protease subunit HslV (182 aa).

Residue threonine 12 is part of the active site. Na(+) is bound by residues alanine 167, cysteine 170, and threonine 173.

Belongs to the peptidase T1B family. HslV subfamily. As to quaternary structure, a double ring-shaped homohexamer of HslV is capped on each side by a ring-shaped HslU homohexamer. The assembly of the HslU/HslV complex is dependent on binding of ATP.

It is found in the cytoplasm. The catalysed reaction is ATP-dependent cleavage of peptide bonds with broad specificity.. Allosterically activated by HslU binding. Functionally, protease subunit of a proteasome-like degradation complex believed to be a general protein degrading machinery. The chain is ATP-dependent protease subunit HslV from Chlorobium phaeobacteroides (strain DSM 266 / SMG 266 / 2430).